The sequence spans 350 residues: uncharacterized protein (350 aa).

The segment at 330–350 is disordered; sequence RHPGDLRSEPHYRPSAKLAEF. The span at 331–341 shows a compositional bias: basic and acidic residues; it reads HPGDLRSEPHY.

This is an uncharacterized protein from Mycobacterium tuberculosis.